The chain runs to 131 residues: uncharacterized protein (131 aa).

A run of 2 helical transmembrane segments spans residues L61–I81 and V102–Y122.

The protein localises to the membrane. This is an uncharacterized protein from Saccharomyces cerevisiae (strain ATCC 204508 / S288c) (Baker's yeast).